We begin with the raw amino-acid sequence, 58 residues long: Photosystem II reaction center protein K (58 aa).

A propeptide spanning residues 1–21 is cleaved from the precursor; the sequence is MTVSYSIYLENSLHFGDALLA. Residues 29-49 traverse the membrane as a helical segment; the sequence is IFDPIVDVMPVIPVFFLLLAF.

The protein belongs to the PsbK family. PSII is composed of 1 copy each of membrane proteins PsbA, PsbB, PsbC, PsbD, PsbE, PsbF, PsbH, PsbI, PsbJ, PsbK, PsbL, PsbM, PsbT, PsbX, PsbY, PsbZ, Psb30/Ycf12, at least 3 peripheral proteins of the oxygen-evolving complex and a large number of cofactors. It forms dimeric complexes.

The protein localises to the plastid. It localises to the chloroplast thylakoid membrane. In terms of biological role, one of the components of the core complex of photosystem II (PSII). PSII is a light-driven water:plastoquinone oxidoreductase that uses light energy to abstract electrons from H(2)O, generating O(2) and a proton gradient subsequently used for ATP formation. It consists of a core antenna complex that captures photons, and an electron transfer chain that converts photonic excitation into a charge separation. This chain is Photosystem II reaction center protein K, found in Adiantum capillus-veneris (Maidenhair fern).